We begin with the raw amino-acid sequence, 363 residues long: Large ribosomal subunit protein uL4 (363 aa).

It belongs to the universal ribosomal protein uL4 family. In terms of assembly, component of the large ribosomal subunit. Mature ribosomes consist of a small (40S) and a large (60S) subunit. The 40S subunit contains about 32 different proteins and 1 molecule of RNA (18S). The 60S subunit contains 45 different proteins and 3 molecules of RNA (25S, 5.8S and 5S).

Its subcellular location is the cytoplasm. In terms of biological role, component of the ribosome, a large ribonucleoprotein complex responsible for the synthesis of proteins in the cell. The small ribosomal subunit (SSU) binds messenger RNAs (mRNAs) and translates the encoded message by selecting cognate aminoacyl-transfer RNA (tRNA) molecules. The large subunit (LSU) contains the ribosomal catalytic site termed the peptidyl transferase center (PTC), which catalyzes the formation of peptide bonds, thereby polymerizing the amino acids delivered by tRNAs into a polypeptide chain. The nascent polypeptides leave the ribosome through a tunnel in the LSU and interact with protein factors that function in enzymatic processing, targeting, and the membrane insertion of nascent chains at the exit of the ribosomal tunnel. In Candida albicans (strain SC5314 / ATCC MYA-2876) (Yeast), this protein is Large ribosomal subunit protein uL4.